Here is an 89-residue protein sequence, read N- to C-terminus: Small ribosomal subunit protein uS15 (89 aa).

The protein belongs to the universal ribosomal protein uS15 family. Part of the 30S ribosomal subunit. Forms a bridge to the 50S subunit in the 70S ribosome, contacting the 23S rRNA.

Functionally, one of the primary rRNA binding proteins, it binds directly to 16S rRNA where it helps nucleate assembly of the platform of the 30S subunit by binding and bridging several RNA helices of the 16S rRNA. Forms an intersubunit bridge (bridge B4) with the 23S rRNA of the 50S subunit in the ribosome. The chain is Small ribosomal subunit protein uS15 from Thermomicrobium roseum (strain ATCC 27502 / DSM 5159 / P-2).